The sequence spans 302 residues: Homoserine O-acetyltransferase (302 aa).

The active-site Acyl-thioester intermediate is Cys-142. Residues Lys-163 and Ser-192 each contribute to the substrate site. His-235 (proton acceptor) is an active-site residue. Glu-237 is a catalytic residue. Residue Arg-249 participates in substrate binding.

It belongs to the MetA family.

The protein resides in the cytoplasm. The enzyme catalyses L-homoserine + acetyl-CoA = O-acetyl-L-homoserine + CoA. The protein operates within amino-acid biosynthesis; L-methionine biosynthesis via de novo pathway; O-acetyl-L-homoserine from L-homoserine: step 1/1. Its function is as follows. Transfers an acetyl group from acetyl-CoA to L-homoserine, forming acetyl-L-homoserine. This is Homoserine O-acetyltransferase from Bacillus pumilus (strain SAFR-032).